Reading from the N-terminus, the 281-residue chain is Arabinose operon regulatory protein (281 aa).

Residues P8, T24, R38, Y82, and H93 each coordinate alpha-L-arabinopyanose. Positions 180 to 279 (RDACQYISDH…GASPSEFRAG (100 aa)) constitute an HTH araC/xylS-type domain. 2 consecutive DNA-binding regions (H-T-H motif) follow at residues 198 to 219 (ASVAQHVCLSPSRLSHLFRQQL) and 246 to 269 (IATVGRNVGFDDQLYFSRVFKKCT).

Homodimer.

The protein localises to the cytoplasm. Its function is as follows. Transcription factor that regulates the expression of several genes involved in the transport and metabolism of L-arabinose. The chain is Arabinose operon regulatory protein from Salmonella typhimurium (strain LT2 / SGSC1412 / ATCC 700720).